Consider the following 251-residue polypeptide: 5'-nucleotidase SurE (251 aa).

The a divalent metal cation site is built by Asp8, Asp9, Ser39, and Asn91.

It belongs to the SurE nucleotidase family. Requires a divalent metal cation as cofactor.

The protein resides in the cytoplasm. The enzyme catalyses a ribonucleoside 5'-phosphate + H2O = a ribonucleoside + phosphate. Its function is as follows. Nucleotidase that shows phosphatase activity on nucleoside 5'-monophosphates. The sequence is that of 5'-nucleotidase SurE from Halorhodospira halophila (strain DSM 244 / SL1) (Ectothiorhodospira halophila (strain DSM 244 / SL1)).